Here is a 550-residue protein sequence, read N- to C-terminus: C-type lectin domain family 4 member F (550 aa).

Residues 1–42 are Cytoplasmic-facing; it reads MKEAELNRDVAKFCTDNQCVILQPQGLGPKSAAPMAPRTLRH. Residues 43–69 form a helical; Signal-anchor for type II membrane protein membrane-spanning segment; the sequence is VQAIVALVVVTVFFSLLALFVVVLQPW. At 70–550 the chain is on the extracellular side; it reads RQKQNEDHPV…DWSVARTDQS (481 aa). Residues asparagine 87, asparagine 93, asparagine 115, asparagine 132, asparagine 209, and asparagine 255 are each glycosylated (N-linked (GlcNAc...) asparagine). A C-type lectin domain is found at 438–538; the sequence is NFCVSQGAHL…GTAYNWVCKK (101 aa). Disulfide bonds link cysteine 440/cysteine 536 and cysteine 516/cysteine 528.

In terms of tissue distribution, kupffer cells.

The protein localises to the membrane. Receptor with an affinity for galactose and fucose. Could be involved in endocytosis. This is C-type lectin domain family 4 member F (Clec4f) from Rattus norvegicus (Rat).